Reading from the N-terminus, the 831-residue chain is Periplasmic nitrate reductase (831 aa).

A signal peptide (tat-type signal) is located at residues 1-29; that stretch reads MTLTRRDLIKAQAAATAAAAAGLPVSALA. The 4Fe-4S Mo/W bis-MGD-type domain maps to 41–97; that stretch reads IRWSKAPCRFCGTGCGVMVGTRDGQVVATHGDTQAEVNRGLNCVKGYFLSKIMYGED. The [4Fe-4S] cluster site is built by Cys-48, Cys-51, Cys-55, and Cys-83. Residues Lys-85, Gln-152, Asn-177, Cys-181, 214–221, 245–249, 264–266, Met-375, Gln-379, Asn-485, 511–512, Lys-534, Asp-561, and 721–730 each bind Mo-bis(molybdopterin guanine dinucleotide); these read WGSNMAEM, STFTH, GTD, SD, and TGRVLEHWHS. Position 797 (Trp-797) interacts with substrate. Residues Asn-805 and Lys-822 each coordinate Mo-bis(molybdopterin guanine dinucleotide).

Belongs to the prokaryotic molybdopterin-containing oxidoreductase family. NasA/NapA/NarB subfamily. In terms of assembly, component of the periplasmic nitrate reductase NapAB complex composed of NapA and NapB. Requires [4Fe-4S] cluster as cofactor. It depends on Mo-bis(molybdopterin guanine dinucleotide) as a cofactor. Post-translationally, predicted to be exported by the Tat system. The position of the signal peptide cleavage has not been experimentally proven.

It localises to the periplasm. It catalyses the reaction 2 Fe(II)-[cytochrome] + nitrate + 2 H(+) = 2 Fe(III)-[cytochrome] + nitrite + H2O. Its function is as follows. Catalytic subunit of the periplasmic nitrate reductase complex NapAB. Receives electrons from NapB and catalyzes the reduction of nitrate to nitrite. This is Periplasmic nitrate reductase from Cereibacter sphaeroides (strain ATCC 17023 / DSM 158 / JCM 6121 / CCUG 31486 / LMG 2827 / NBRC 12203 / NCIMB 8253 / ATH 2.4.1.) (Rhodobacter sphaeroides).